Reading from the N-terminus, the 207-residue chain is Probable RNA 2'-phosphotransferase (207 aa).

The protein belongs to the KptA/TPT1 family.

Removes the 2'-phosphate from RNA via an intermediate in which the phosphate is ADP-ribosylated by NAD followed by a presumed transesterification to release the RNA and generate ADP-ribose 1''-2''-cyclic phosphate (APPR&gt;P). May function as an ADP-ribosylase. The sequence is that of Probable RNA 2'-phosphotransferase from Methanosarcina barkeri (strain Fusaro / DSM 804).